The chain runs to 445 residues: Argininosuccinate synthase (445 aa).

ATP is bound by residues 17-25 (AFSGGLDTS) and Ala43. Residue Tyr99 coordinates L-citrulline. Positions 129 and 131 each coordinate ATP. L-aspartate is bound by residues Thr131, Asn135, and Asp136. Asn135 lines the L-citrulline pocket. Residue Asp136 participates in ATP binding. The L-citrulline site is built by Arg139 and Ser192. Asp194 is an ATP binding site. L-citrulline-binding residues include Thr201, Glu203, and Glu280.

This sequence belongs to the argininosuccinate synthase family. Type 2 subfamily. As to quaternary structure, homotetramer.

It is found in the cytoplasm. It carries out the reaction L-citrulline + L-aspartate + ATP = 2-(N(omega)-L-arginino)succinate + AMP + diphosphate + H(+). The protein operates within amino-acid biosynthesis; L-arginine biosynthesis; L-arginine from L-ornithine and carbamoyl phosphate: step 2/3. This is Argininosuccinate synthase from Polaromonas naphthalenivorans (strain CJ2).